The chain runs to 509 residues: Hyaluronidase PH-20 (509 aa).

The first 35 residues, 1-35 (MGVLKFKHIFFRSFVKSSGVSQIVFTFLLIPCCLT), serve as a signal peptide directing secretion. Disulfide bonds link Cys-60–Cys-351 and Cys-224–Cys-238. N-linked (GlcNAc...) asparagine glycosylation occurs at Asn-82. Residue Glu-148 is the Proton donor of the active site. N-linked (GlcNAc...) asparagine glycosylation is found at Asn-166, Asn-235, Asn-254, and Asn-368. Intrachain disulfides connect Cys-376–Cys-387, Cys-381–Cys-435, and Cys-437–Cys-464. Asn-393 carries an N-linked (GlcNAc...) asparagine glycan. Residue Ser-490 is the site of GPI-anchor amidated serine attachment. Residues 491–509 (ATMFIVSILFLIISSVASL) constitute a propeptide, removed in mature form.

This sequence belongs to the glycosyl hydrolase 56 family. In terms of processing, N-glycosylated. In terms of tissue distribution, testis.

The protein localises to the cell membrane. It catalyses the reaction Random hydrolysis of (1-&gt;4)-linkages between N-acetyl-beta-D-glucosamine and D-glucuronate residues in hyaluronate.. Its function is as follows. Involved in sperm-egg adhesion. Upon fertilization sperm must first penetrate a layer of cumulus cells that surrounds the egg before reaching the zona pellucida. The cumulus cells are embedded in a matrix containing hyaluronic acid which is formed prior to ovulation. This protein aids in penetrating the layer of cumulus cells by digesting hyaluronic acid. The sequence is that of Hyaluronidase PH-20 (SPAM1) from Homo sapiens (Human).